Reading from the N-terminus, the 828-residue chain is Class I hydrophobin hum3 (828 aa).

The N-terminal stretch at 1–22 (MKYLQFLAAVAAVSAFSGPVLA) is a signal peptide. Residues Asn156, Asn222, and Asn738 are each glycosylated (N-linked (GlcNAc...) asparagine). Intrachain disulfides connect Cys750–Cys808, Cys757–Cys802, Cys758–Cys788, and Cys809–Cys822. An N-linked (GlcNAc...) asparagine glycan is attached at Asn811.

It in the C-terminal section; belongs to the fungal hydrophobin family. As to quaternary structure, self-assembles to form functional amyloid fibrils called rodlets. Self-assembly into fibrillar rodlets occurs spontaneously at hydrophobic:hydrophilic interfaces and the rodlets further associate laterally to form amphipathic monolayers. In terms of processing, hum3 is an atypical hydrophobin that consists in a repetitive repellent-like region that spans 578 aa which is separated from a hydrophobin-like domain by a spacer region containing three possible kex2 processing sites. The repetitive region contains 17 amphipathic repeats of 31-36 aa each of them with a C-terminal putative kex2 processing motif.

It localises to the secreted. The protein localises to the cell wall. Functionally, aerial growth, conidiation, and dispersal of filamentous fungi in the environment rely upon a capability of their secreting small amphipathic proteins called hydrophobins (HPBs) with low sequence identity. Class I can self-assemble into an outermost layer of rodlet bundles on aerial cell surfaces, conferring cellular hydrophobicity that supports fungal growth, development and dispersal; whereas Class II form highly ordered films at water-air interfaces through intermolecular interactions but contribute nothing to the rodlet structure. Atypical class I hydrophobin that is preceded by a signal sequence and 17 imperfect repeats. The repeated peptides might function as repellents whereas the class I hydrophobin seems not to be crucial for the formation of aerial hyphae. Hydrophobins of Mycosarcoma maydis have been functionally replaced, at least partially, by repellents. Hum3 and rsp1 together are pathogenicity proteins that share an essential function in early stages of the infection. The protein is Class I hydrophobin hum3 of Mycosarcoma maydis (Corn smut fungus).